The following is a 202-amino-acid chain: Holliday junction branch migration complex subunit RuvA (202 aa).

A domain I region spans residues 1-64 (MIGRLSGTLL…EDAHLLFGFA (64 aa)). Residues 65-143 (GRAERELFRQ…SLPSADLLSP (79 aa)) are domain II. Residues 144 to 152 (APAAGAALL) form a flexible linker region. The domain III stretch occupies residues 153–202 (VENDERADISQALQALGYSAREAEAALKSVPDGTDVATGIRLALKALARP).

The protein belongs to the RuvA family. In terms of assembly, homotetramer. Forms an RuvA(8)-RuvB(12)-Holliday junction (HJ) complex. HJ DNA is sandwiched between 2 RuvA tetramers; dsDNA enters through RuvA and exits via RuvB. An RuvB hexamer assembles on each DNA strand where it exits the tetramer. Each RuvB hexamer is contacted by two RuvA subunits (via domain III) on 2 adjacent RuvB subunits; this complex drives branch migration. In the full resolvosome a probable DNA-RuvA(4)-RuvB(12)-RuvC(2) complex forms which resolves the HJ.

It localises to the cytoplasm. The RuvA-RuvB-RuvC complex processes Holliday junction (HJ) DNA during genetic recombination and DNA repair, while the RuvA-RuvB complex plays an important role in the rescue of blocked DNA replication forks via replication fork reversal (RFR). RuvA specifically binds to HJ cruciform DNA, conferring on it an open structure. The RuvB hexamer acts as an ATP-dependent pump, pulling dsDNA into and through the RuvAB complex. HJ branch migration allows RuvC to scan DNA until it finds its consensus sequence, where it cleaves and resolves the cruciform DNA. This Laribacter hongkongensis (strain HLHK9) protein is Holliday junction branch migration complex subunit RuvA.